The sequence spans 100 residues: Probable DNA-binding protein HU (100 aa).

This sequence belongs to the bacterial histone-like protein family.

Its function is as follows. Histone-like DNA-binding protein which is capable of wrapping DNA to stabilize it, and thus to prevent its denaturation under extreme environmental conditions. The protein is Probable DNA-binding protein HU (hup) of Chlamydia pneumoniae (Chlamydophila pneumoniae).